The following is a 127-amino-acid chain: Cytochrome c' (127 aa).

Residue Q1 is modified to Pyrrolidone carboxylic acid. Residues R12, Q13, D67, C116, C119, and H120 each coordinate heme c.

As to quaternary structure, homodimer. In terms of processing, binds 1 heme c group covalently per subunit.

The protein localises to the periplasm. Cytochrome c' is the most widely occurring bacterial c-type cytochrome. Cytochromes c' are high-spin proteins and the heme has no sixth ligand. Their exact function is not known. The chain is Cytochrome c' from Alcaligenes xylosoxydans xylosoxydans (Achromobacter xylosoxidans).